Reading from the N-terminus, the 172-residue chain is ATP-dependent kinase-like protein notR' (172 aa).

This sequence belongs to the YFH7 family.

Its function is as follows. ATP-dependent kinase-like protein; part of the gene cluster that mediates the biosynthesis of notoamide, a fungal indole alkaloid that belongs to a family of natural products containing a characteristic bicyclo[2.2.2]diazaoctane core. The first step of notoamide biosynthesis involves coupling of L-proline and L-tryptophan by the bimodular NRPS notE', to produce cyclo-L-tryptophan-L-proline called brevianamide F. The reverse prenyltransferase notF' then acts as a deoxybrevianamide E synthase and converts brevianamide F to deoxybrevianamide E via reverse prenylation at C-2 of the indole ring leading to the bicyclo[2.2.2]diazaoctane core. Deoxybrevianamide E is further hydroxylated at C-6 of the indole ring, likely catalyzed by the cytochrome P450 monooxygenase notG', to yield 6-hydroxy-deoxybrevianamide E. 6-hydroxy-deoxybrevianamide E is a specific substrate of the prenyltransferase notC' for normal prenylation at C-7 to produce 6-hydroxy-7-prenyl-deoxybrevianamide, also called notoamide S. As the proposed pivotal branching point in notoamide biosynthesis, notoamide S can be diverted to notoamide E through an oxidative pyran ring closure putatively catalyzed by either notH' cytochrome P450 monooxygenase or the notD' FAD-linked oxidoreductase. This step would be followed by an indole 2,3-epoxidation-initiated pinacol-like rearrangement catalyzed by the notB' FAD-dependent monooxygenase leading to the formation of notoamide C and notoamide D. On the other hand notoamide S is converted to notoamide T by notH' (or notD'), a bifunctional oxidase that also functions as the intramolecular Diels-Alderase responsible for generation of (-)-notoamide T. To generate antipodal (+)-notoaminide T, notH (or notD) in Aspergillus strain MF297-2 is expected to catalyze a Diels-Alder reaction leading to the opposite stereochemistry. The remaining oxidoreductase notD' (or notH') likely catalyzes the oxidative pyran ring formation to yield (-)-stephacidin A. The FAD-dependent monooxygenase notI' is highly similar to notB' and is predicted to catalyze a similar conversion from (-)-stephacidin A to (+)-notoamide B via the 2,3-epoxidation of (-)-stephacidin A followed by a pinacol-type rearrangement. Finally, it remains unclear which enzyme could be responsible for the final hydroxylation steps leading to notoamide A and sclerotiamide. The function of notQ' in the notoamide biosynthesis has not been determined yet. The protein is ATP-dependent kinase-like protein notR' of Aspergillus versicolor.